A 479-amino-acid chain; its full sequence is Glucagon receptor (479 aa).

An N-terminal signal peptide occupies residues 1–25; the sequence is MPPARLRHPHLLLLLLLACQPQAPA. At 26 to 136 the chain is on the extracellular side; that stretch reads AQAMDFLFQK…ELGVQREVAE (111 aa). Cystine bridges form between Cys-43-Cys-67, Cys-58-Cys-100, and Cys-81-Cys-121. N-linked (GlcNAc...) asparagine glycosylation is found at Asn-46, Asn-59, Asn-74, Asn-78, and Asn-117. A helical transmembrane segment spans residues 137 to 161; sequence MYSSFQAMYTAGYSLSLAALLLALA. Residues 162–173 lie on the Cytoplasmic side of the membrane; it reads ILLGLSKLHCTR. Residues 174 to 198 form a helical membrane-spanning segment; it reads NYIHANLLASFVLRASSVLALDALL. Topologically, residues 199 to 225 are extracellular; that stretch reads KTRYSQRLGDDLSVSIWLSDEAVAGCR. Cys-224 and Cys-294 are oxidised to a cystine. The chain crosses the membrane as a helical span at residues 226–249; that stretch reads VAAVFMQYGVVANYCWLLVEGVYL. At 250-263 the chain is on the cytoplasmic side; sequence HSLLRQATIPERSC. Residues 264-285 form a helical membrane-spanning segment; the sequence is FPLYLAIGWGAPMLFVIPWAVV. The Extracellular segment spans residues 286 to 303; that stretch reads KCLFENIQCWTSNDNMGF. Residues 304-326 form a helical membrane-spanning segment; sequence WWILRFPVFLAILINFSIFIRVL. Over 327 to 350 the chain is Cytoplasmic; it reads HVLVAKLRAHQMRCTDYKFRLARS. Residues 351–369 form a helical membrane-spanning segment; sequence TLTLIPLLGVHEVVFAFVT. At 370-381 the chain is on the extracellular side; the sequence is DEHAQGALRSAK. Residues 382–402 traverse the membrane as a helical segment; sequence LFFDLFLSSFQGLLVAVLYCF. Residues 403–479 lie on the Cytoplasmic side of the membrane; it reads LNKEVQAELL…GLPGVAENPF (77 aa). The interval 426-479 is disordered; the sequence is KAHRVGSHSARPPSGPPSEKLLLSTGGSSNGTSQEPSAETHLASGLPGVAENPF. Low complexity predominate over residues 446–458; sequence LLLSTGGSSNGTS. The residue at position 458 (Ser-458) is a Phosphoserine.

It belongs to the G-protein coupled receptor 2 family. Ligand-binding promotes phosphorylation of serine residues in the C-terminal cytoplasmic domain. Phosphorylation is important for receptor endocytosis after ligand-binding.

It is found in the cell membrane. Its function is as follows. G-protein coupled receptor for glucagon that plays a central role in the regulation of blood glucose levels and glucose homeostasis. Regulates the rate of hepatic glucose production by promoting glycogen hydrolysis and gluconeogenesis. Plays an important role in mediating the responses to fasting. Ligand binding causes a conformation change that triggers signaling via guanine nucleotide-binding proteins (G proteins) and modulates the activity of down-stream effectors, such as adenylate cyclase. Promotes activation of adenylate cyclase. Besides, plays a role in signaling via a phosphatidylinositol-calcium second messenger system. The protein is Glucagon receptor of Sus scrofa (Pig).